We begin with the raw amino-acid sequence, 504 residues long: ATP synthase subunit alpha, chloroplastic (504 aa).

170-177 (GDRQTGKT) contacts ATP.

It belongs to the ATPase alpha/beta chains family. As to quaternary structure, F-type ATPases have 2 components, CF(1) - the catalytic core - and CF(0) - the membrane proton channel. CF(1) has five subunits: alpha(3), beta(3), gamma(1), delta(1), epsilon(1). CF(0) has four main subunits: a, b, b' and c.

Its subcellular location is the plastid. It is found in the chloroplast thylakoid membrane. It catalyses the reaction ATP + H2O + 4 H(+)(in) = ADP + phosphate + 5 H(+)(out). Produces ATP from ADP in the presence of a proton gradient across the membrane. The alpha chain is a regulatory subunit. The protein is ATP synthase subunit alpha, chloroplastic of Hordeum vulgare (Barley).